Here is a 217-residue protein sequence, read N- to C-terminus: Octanoyltransferase (217 aa).

Residues 35-214 (DEAGERIWLL…TLPAFLDKLR (180 aa)) enclose the BPL/LPL catalytic domain. Substrate-binding positions include 73 to 80 (RGGRYTYH), 145 to 147 (AIG), and 158 to 160 (GFS). The Acyl-thioester intermediate role is filled by Cys176.

Belongs to the LipB family.

Its subcellular location is the cytoplasm. The enzyme catalyses octanoyl-[ACP] + L-lysyl-[protein] = N(6)-octanoyl-L-lysyl-[protein] + holo-[ACP] + H(+). It functions in the pathway protein modification; protein lipoylation via endogenous pathway; protein N(6)-(lipoyl)lysine from octanoyl-[acyl-carrier-protein]: step 1/2. Functionally, catalyzes the transfer of endogenously produced octanoic acid from octanoyl-acyl-carrier-protein onto the lipoyl domains of lipoate-dependent enzymes. Lipoyl-ACP can also act as a substrate although octanoyl-ACP is likely to be the physiological substrate. This Sphingopyxis alaskensis (strain DSM 13593 / LMG 18877 / RB2256) (Sphingomonas alaskensis) protein is Octanoyltransferase.